The following is a 213-amino-acid chain: Orotate phosphoribosyltransferase (213 aa).

K26 provides a ligand contact to 5-phospho-alpha-D-ribose 1-diphosphate. 34 to 35 (FF) lines the orotate pocket. 5-phospho-alpha-D-ribose 1-diphosphate contacts are provided by residues 72–73 (YK), R98, K99, K102, H104, and 123–131 (DDVISAGTS). Residues S127 and R155 each contribute to the orotate site.

The protein belongs to the purine/pyrimidine phosphoribosyltransferase family. PyrE subfamily. In terms of assembly, homodimer. Mg(2+) serves as cofactor.

It catalyses the reaction orotidine 5'-phosphate + diphosphate = orotate + 5-phospho-alpha-D-ribose 1-diphosphate. It functions in the pathway pyrimidine metabolism; UMP biosynthesis via de novo pathway; UMP from orotate: step 1/2. Functionally, catalyzes the transfer of a ribosyl phosphate group from 5-phosphoribose 1-diphosphate to orotate, leading to the formation of orotidine monophosphate (OMP). The protein is Orotate phosphoribosyltransferase of Neisseria meningitidis serogroup A / serotype 4A (strain DSM 15465 / Z2491).